The sequence spans 59 residues: UPF0434 protein HDEF_0234 (59 aa).

It belongs to the UPF0434 family.

This chain is UPF0434 protein HDEF_0234, found in Hamiltonella defensa subsp. Acyrthosiphon pisum (strain 5AT).